The sequence spans 825 residues: Leucine-rich repeat and guanylate kinase domain-containing protein (825 aa).

The tract at residues 73 to 96 (DSDGDEDQGEGEAGSEESSESEML) is disordered. LRR repeat units follow at residues 129 to 149 (YLNL…CGYV), 150 to 171 (HLQK…SCMP), 172 to 193 (YLLE…KPPK), 194 to 215 (NLKK…SAYH), 216 to 237 (ALTK…EMCN), 238 to 259 (NLIH…NKLP), 260 to 280 (IKIL…EDLK), 281 to 302 (ALQN…ENHD), and 303 to 324 (LLEV…EYIK). The LRRCT domain maps to 337-375 (NPIQEKSEYWFFVIFMLLRLTELDQKKIKVEEKVSAVNK). In terms of domain architecture, Guanylate kinase-like spans 414-597 (YPMLILAGPE…AYQKLSQLIR (184 aa)). Residue 421–428 (GPEACGKR) participates in ATP binding. The interval 760-825 (PEGSISSHLG…TLPPIPQGRR (66 aa)) is disordered. Polar residues predominate over residues 763 to 774 (SISSHLGSGASD). The segment covering 816–825 (TLPPIPQGRR) has biased composition (pro residues).

As to quaternary structure, interacts (via guanylate kinase-like domain) with RIMBP3 (via coiled-coil region). Interacts (via guanylate kinase-like domain) with HOOK2. Interacts (via LRRCT domain) with KLC3. Interacts with HOOK1 and HOOK3.

It localises to the cytoplasmic vesicle. It is found in the secretory vesicle. The protein localises to the acrosome. Its subcellular location is the cytoplasm. The protein resides in the cytoskeleton. It localises to the cilium basal body. Functionally, involved in multiple aspects of sperm assembly including acrosome attachment, shaping of the sperm head and in the early aspects of axoneme development. Not essential for primary cilium biogenesis. The polypeptide is Leucine-rich repeat and guanylate kinase domain-containing protein (LRGUK) (Homo sapiens (Human)).